The following is a 299-amino-acid chain: UDP-N-acetylenolpyruvoylglucosamine reductase (299 aa).

An FAD-binding PCMH-type domain is found at Leu-19 to Ser-192. Arg-169 is a catalytic residue. Catalysis depends on Cys-221, which acts as the Proton donor. Residue Glu-292 is part of the active site.

This sequence belongs to the MurB family. The cofactor is FAD.

It is found in the cytoplasm. The catalysed reaction is UDP-N-acetyl-alpha-D-muramate + NADP(+) = UDP-N-acetyl-3-O-(1-carboxyvinyl)-alpha-D-glucosamine + NADPH + H(+). It functions in the pathway cell wall biogenesis; peptidoglycan biosynthesis. In terms of biological role, cell wall formation. The protein is UDP-N-acetylenolpyruvoylglucosamine reductase of Oleidesulfovibrio alaskensis (strain ATCC BAA-1058 / DSM 17464 / G20) (Desulfovibrio alaskensis).